A 479-amino-acid polypeptide reads, in one-letter code: Proline--tRNA ligase (479 aa).

Belongs to the class-II aminoacyl-tRNA synthetase family. ProS type 3 subfamily. Homodimer.

The protein localises to the cytoplasm. It catalyses the reaction tRNA(Pro) + L-proline + ATP = L-prolyl-tRNA(Pro) + AMP + diphosphate. Functionally, catalyzes the attachment of proline to tRNA(Pro) in a two-step reaction: proline is first activated by ATP to form Pro-AMP and then transferred to the acceptor end of tRNA(Pro). This chain is Proline--tRNA ligase, found in Agathobacter rectalis (strain ATCC 33656 / DSM 3377 / JCM 17463 / KCTC 5835 / VPI 0990) (Eubacterium rectale).